Consider the following 59-residue polypeptide: Venom protein 37.1 (59 aa).

The first 18 residues, 1–18 (MVSTLMIASVKLRLYCTA), serve as a signal peptide directing secretion.

This sequence belongs to the non-disulfide-bridged peptide (NDBP) superfamily. Long chain multifunctional peptide (group 2) family. As to expression, expressed by the venom gland.

The protein resides in the secreted. The sequence is that of Venom protein 37.1 from Lychas mucronatus (Chinese swimming scorpion).